We begin with the raw amino-acid sequence, 523 residues long: Lysine--tRNA ligase (523 aa).

Residues 30–38 carry the 'HIGH' region motif; the sequence is PSGYVHVGN. Residues Asp95, Cys99, His100, His106, Cys177, His180, Cys199, and His203 each contribute to the Zn(2+) site. The 'KMSKS' region motif lies at 279 to 283; the sequence is KMSGS.

Belongs to the class-I aminoacyl-tRNA synthetase family. The cofactor is Zn(2+).

The protein resides in the cytoplasm. The enzyme catalyses tRNA(Lys) + L-lysine + ATP = L-lysyl-tRNA(Lys) + AMP + diphosphate. In Pyrococcus furiosus (strain ATCC 43587 / DSM 3638 / JCM 8422 / Vc1), this protein is Lysine--tRNA ligase (lysS).